A 181-amino-acid polypeptide reads, in one-letter code: MRILGIDPGLRTTGFGVIEKQGNKLAYIASGTIKSDGNANLPERLKTLYDGISEVSRTYAPDCAAIEKVFVNVNPQSTLLLGQARGAAICGLVGYGLPVFEYTALQLKVAVVGYGRANKAQVQEMVTRLLMLPGQPGSDAADALGVAICHANGGDTLGTLAGLAPDLVRKGMRVRRGRLVG.

Catalysis depends on residues Asp-7, Glu-67, and Asp-139. Mg(2+) is bound by residues Asp-7, Glu-67, and Asp-139.

Belongs to the RuvC family. Homodimer which binds Holliday junction (HJ) DNA. The HJ becomes 2-fold symmetrical on binding to RuvC with unstacked arms; it has a different conformation from HJ DNA in complex with RuvA. In the full resolvosome a probable DNA-RuvA(4)-RuvB(12)-RuvC(2) complex forms which resolves the HJ. The cofactor is Mg(2+).

Its subcellular location is the cytoplasm. The catalysed reaction is Endonucleolytic cleavage at a junction such as a reciprocal single-stranded crossover between two homologous DNA duplexes (Holliday junction).. The RuvA-RuvB-RuvC complex processes Holliday junction (HJ) DNA during genetic recombination and DNA repair. Endonuclease that resolves HJ intermediates. Cleaves cruciform DNA by making single-stranded nicks across the HJ at symmetrical positions within the homologous arms, yielding a 5'-phosphate and a 3'-hydroxyl group; requires a central core of homology in the junction. The consensus cleavage sequence is 5'-(A/T)TT(C/G)-3'. Cleavage occurs on the 3'-side of the TT dinucleotide at the point of strand exchange. HJ branch migration catalyzed by RuvA-RuvB allows RuvC to scan DNA until it finds its consensus sequence, where it cleaves and resolves the cruciform DNA. This Cupriavidus taiwanensis (strain DSM 17343 / BCRC 17206 / CCUG 44338 / CIP 107171 / LMG 19424 / R1) (Ralstonia taiwanensis (strain LMG 19424)) protein is Crossover junction endodeoxyribonuclease RuvC.